A 252-amino-acid chain; its full sequence is Imidazole glycerol phosphate synthase subunit HisF (252 aa).

Active-site residues include Asp-11 and Asp-130.

This sequence belongs to the HisA/HisF family. As to quaternary structure, heterodimer of HisH and HisF.

The protein resides in the cytoplasm. It carries out the reaction 5-[(5-phospho-1-deoxy-D-ribulos-1-ylimino)methylamino]-1-(5-phospho-beta-D-ribosyl)imidazole-4-carboxamide + L-glutamine = D-erythro-1-(imidazol-4-yl)glycerol 3-phosphate + 5-amino-1-(5-phospho-beta-D-ribosyl)imidazole-4-carboxamide + L-glutamate + H(+). It participates in amino-acid biosynthesis; L-histidine biosynthesis; L-histidine from 5-phospho-alpha-D-ribose 1-diphosphate: step 5/9. In terms of biological role, IGPS catalyzes the conversion of PRFAR and glutamine to IGP, AICAR and glutamate. The HisF subunit catalyzes the cyclization activity that produces IGP and AICAR from PRFAR using the ammonia provided by the HisH subunit. The chain is Imidazole glycerol phosphate synthase subunit HisF from Paramagnetospirillum magneticum (strain ATCC 700264 / AMB-1) (Magnetospirillum magneticum).